A 169-amino-acid polypeptide reads, in one-letter code: Myosin regulatory light chain 11 (169 aa).

Alanine 2 carries the post-translational modification N,N,N-trimethylalanine. 2 positions are modified to phosphoserine: serine 15 and serine 16. Residues threonine 25 and threonine 35 each carry the phosphothreonine modification. Residues threonine 25–leucine 60 form the EF-hand 1 domain. 4 residues coordinate Ca(2+): aspartate 38, asparagine 40, aspartate 42, and aspartate 49. The residue at position 75 (serine 75) is a Phosphoserine. 2 consecutive EF-hand domains span residues aspartate 95–arginine 130 and phenylalanine 131–lysine 166. Threonine 101 bears the Phosphothreonine mark.

As to quaternary structure, myosin is a hexamer of 2 heavy chains and 4 light chains.

In terms of biological role, myosin regulatory subunit that plays an essential to maintain muscle integrity during early development. Plays a role in muscle contraction. In Rattus norvegicus (Rat), this protein is Myosin regulatory light chain 11 (Myl11).